The following is a 93-amino-acid chain: Phosphoribosyl-ATP pyrophosphatase (93 aa).

Belongs to the PRA-PH family.

It localises to the cytoplasm. The catalysed reaction is 1-(5-phospho-beta-D-ribosyl)-ATP + H2O = 1-(5-phospho-beta-D-ribosyl)-5'-AMP + diphosphate + H(+). Its pathway is amino-acid biosynthesis; L-histidine biosynthesis; L-histidine from 5-phospho-alpha-D-ribose 1-diphosphate: step 2/9. This is Phosphoribosyl-ATP pyrophosphatase from Rhodococcus jostii (strain RHA1).